The primary structure comprises 206 residues: Large ribosomal subunit protein uL4 (206 aa).

This sequence belongs to the universal ribosomal protein uL4 family. In terms of assembly, part of the 50S ribosomal subunit.

Its function is as follows. One of the primary rRNA binding proteins, this protein initially binds near the 5'-end of the 23S rRNA. It is important during the early stages of 50S assembly. It makes multiple contacts with different domains of the 23S rRNA in the assembled 50S subunit and ribosome. Forms part of the polypeptide exit tunnel. This is Large ribosomal subunit protein uL4 from Bradyrhizobium diazoefficiens (strain JCM 10833 / BCRC 13528 / IAM 13628 / NBRC 14792 / USDA 110).